The chain runs to 462 residues: Histidine--tRNA ligase (462 aa).

Belongs to the class-II aminoacyl-tRNA synthetase family. As to quaternary structure, homodimer.

Its subcellular location is the cytoplasm. It carries out the reaction tRNA(His) + L-histidine + ATP = L-histidyl-tRNA(His) + AMP + diphosphate + H(+). This is Histidine--tRNA ligase from Trichormus variabilis (strain ATCC 29413 / PCC 7937) (Anabaena variabilis).